The primary structure comprises 1337 residues: Aldehyde oxidase 4 (1337 aa).

Residues 4–91 (DDLVFAVNGE…GCSITTSDGL (88 aa)) form the 2Fe-2S ferredoxin-type domain. Cysteine 43, cysteine 48, cysteine 51, cysteine 73, cysteine 113, cysteine 116, cysteine 155, and cysteine 157 together coordinate [2Fe-2S] cluster. Positions 225-409 (LDQTRYHWST…LKVHIPRWIA (185 aa)) constitute an FAD-binding PCMH-type domain. FAD contacts are provided by residues 259 to 266 (LVVGNTGT), 342 to 346 (SIGGN), aspartate 358, and leucine 399. Residues glutamine 771, phenylalanine 802, and arginine 915 each coordinate Mo-molybdopterin. Catalysis depends on glutamate 1265, which acts as the Proton acceptor.

The protein belongs to the xanthine dehydrogenase family. Aldehyde oxidases (AO) are homodimers and heterodimers of AO subunits. [2Fe-2S] cluster serves as cofactor. It depends on FAD as a cofactor. Mo-molybdopterin is required as a cofactor. In terms of tissue distribution, transcripts expressed at high levels in developing siliques and at low levels in dry seeds.

The protein resides in the cytoplasm. It catalyses the reaction indole-3-acetaldehyde + O2 + H2O = (indol-3-yl)acetate + H2O2 + H(+). The enzyme catalyses an aldehyde + O2 + H2O = a carboxylate + H2O2 + H(+). It carries out the reaction benzaldehyde + O2 + H2O = benzoate + H2O2 + H(+). The catalysed reaction is hexanal + O2 + H2O = hexanoate + H2O2 + H(+). It catalyses the reaction 1-naphthaldehyde + O2 + H2O = 1-naphthoate + H2O2 + H(+). The enzyme catalyses vanillin + O2 + H2O = vanillate + H2O2 + H(+). It carries out the reaction malonaldehyde + O2 + H2O = 3-oxopropanoate + H2O2 + H(+). The catalysed reaction is citral + O2 + H2O = 3,7-dimethylocta-2,6-dienoate + H2O2 + H(+). It catalyses the reaction acrolein + O2 + H2O = acrylate + H2O2 + H(+). The enzyme catalyses (E)-4-hydroxynon-2-enal + O2 + H2O = (E)-4-hydroxynon-2-enoate + H2O2 + H(+). It carries out the reaction (E)-cinnamaldehyde + O2 + H2O = (E)-cinnamate + H2O2 + H(+). The catalysed reaction is indole-3-carbaldehyde + O2 + H2O = indole-3-carboxylate + H2O2 + H(+). It catalyses the reaction propanal + O2 + H2O = propanoate + H2O2 + H(+). The enzyme catalyses dodecanal + O2 + H2O = dodecanoate + H2O2 + H(+). It carries out the reaction salicylaldehyde + O2 + H2O = salicylate + H2O2 + H(+). Its activity is regulated as follows. Inhibited by Cu(2+). In terms of biological role, aldehyde oxidase with a broad substrate specificity. Involved in the accumulation of benzoic acid (BA) in siliques. Delays and protects siliques from senescence by catalyzing aldehyde detoxification in siliques. Catalyzes the oxidation of an array of aromatic and aliphatic aldehydes, including vanillin and the reactive carbonyl species (RCS) acrolein, 4-hydroxyl-2-nonenal (HNE), and malondialdehyde (MDA). The sequence is that of Aldehyde oxidase 4 from Arabidopsis thaliana (Mouse-ear cress).